Reading from the N-terminus, the 222-residue chain is MPSLSKEAALVHEALVARGLETPLRPPVHEMDNETRKSLIAGHMTEIMQLLNLDLADDSLMETPHRIAKMYVDEIFSGLDYANFPKITLIENKMKVDEMVTVRDITLTSTCEHHFVTIDGKATVAYIPKDSVIGLSKINRIVQFFAQRPQVQERLTQQILIALQTLLGTNNVAVSIDAVHYCVKARGIRDATSATTTTSLGGLFKSSQNTRHEFLRAVRHHN.

Zn(2+)-binding residues include C111, H114, and C182.

This sequence belongs to the GTP cyclohydrolase I family. As to quaternary structure, homomer.

The catalysed reaction is GTP + H2O = 7,8-dihydroneopterin 3'-triphosphate + formate + H(+). The protein operates within cofactor biosynthesis; 7,8-dihydroneopterin triphosphate biosynthesis; 7,8-dihydroneopterin triphosphate from GTP: step 1/1. This chain is GTP cyclohydrolase 1, found in Shigella boydii serotype 18 (strain CDC 3083-94 / BS512).